A 398-amino-acid polypeptide reads, in one-letter code: Thyrotropin-releasing hormone receptor (398 aa).

The Extracellular portion of the chain corresponds to 1 to 28; sequence MENETGSELNQTQLQPRAVVALEYQVVT. Residues asparagine 3 and asparagine 10 are each glycosylated (N-linked (GlcNAc...) asparagine). Residues 29-51 traverse the membrane as a helical segment; sequence ILLVLIICGLGIVGNIMVVLVVM. Residues 52 to 61 are Cytoplasmic-facing; that stretch reads RTKHMRTPTN. Residues 62 to 83 form a helical membrane-spanning segment; that stretch reads CYLVSLAVADLMVLVAAGLPNI. At 84–99 the chain is on the extracellular side; it reads TDSIYGSWVYGYVGCL. Cysteine 98 and cysteine 179 form a disulfide bridge. A helical transmembrane segment spans residues 100–121; sequence CITYLQYLGINASSCSITAFTI. The Cytoplasmic segment spans residues 122 to 144; sequence ERYIAICHPIKAQFLCTFSRAKK. The helical transmembrane segment at 145–168 threads the bilayer; sequence IIIFVWAFTSIYCMLWFFLLDLNI. Topologically, residues 169-193 are extracellular; it reads STYKDAIVVSCGYKISRNYYSPIYL. Residues 194-215 form a helical membrane-spanning segment; it reads MDFGVFYVVPMILATVLYGFIA. Over 216–266 the chain is Cytoplasmic; sequence RILFLNPIPSDPKENSNMWKNDSTHQNKNLNSKTSNRYFNSTVSSRKQVTK. The helical transmembrane segment at 267-288 threads the bilayer; the sequence is MLAVVVILFALLWMPYRTLVVV. Residues 289-296 lie on the Extracellular side of the membrane; that stretch reads NSFLSSPF. The chain crosses the membrane as a helical span at residues 297 to 319; that stretch reads QENWFLLFCRICIYLNSAINPVI. The Cytoplasmic portion of the chain corresponds to 320–398; that stretch reads YNLMSQKFRA…LASEITFNQS (79 aa).

It belongs to the G-protein coupled receptor 1 family.

The protein localises to the cell membrane. Receptor for thyrotropin-releasing hormone (TRH). Upon ligand binding, this G-protein-coupled receptor triggers activation of the phosphatidylinositol (IP3)-calcium-protein kinase C (PKC) pathway. This Bos taurus (Bovine) protein is Thyrotropin-releasing hormone receptor (TRHR).